We begin with the raw amino-acid sequence, 563 residues long: Tripeptidyl-peptidase 1 (563 aa).

The N-terminal stretch at 1–19 is a signal peptide; the sequence is MRLRTCLLGLLALCVASKC. Positions 20 to 195 are cleaved as a propeptide — removed in mature form; sequence SYSPEPDQQR…PEPQVSGTVG (176 aa). C111 and C122 are oxidised to a cystine. Residues 199-563 enclose the Peptidase S53 domain; that stretch reads GVTPSVIRQR…PALLKALIKP (365 aa). Residues N210 and N222 are each glycosylated (N-linked (GlcNAc...) asparagine). Catalysis depends on charge relay system residues E272 and D276. Residues N286, N313, and N443 are each glycosylated (N-linked (GlcNAc...) asparagine). Disulfide bonds link C365-C526 and C522-C537. The Charge relay system role is filled by S475. Ca(2+) is bound by residues D517 and V518. Ca(2+)-binding residues include G539, G541, and D543.

In terms of assembly, monomer. Interacts with CLN5. Interacts with CLN3. Ca(2+) is required as a cofactor. Post-translationally, activated by autocatalytic proteolytical processing upon acidification. N-glycosylation is required for processing and activity.

The protein resides in the lysosome. It is found in the melanosome. The catalysed reaction is Release of an N-terminal tripeptide from a polypeptide, but also has endopeptidase activity.. Its function is as follows. Lysosomal serine protease with tripeptidyl-peptidase I activity. May act as a non-specific lysosomal peptidase which generates tripeptides from the breakdown products produced by lysosomal proteinases. Requires substrates with an unsubstituted N-terminus. The chain is Tripeptidyl-peptidase 1 (TPP1) from Canis lupus familiaris (Dog).